The primary structure comprises 236 residues: Eukaryotic translation initiation factor 3 subunit K (236 aa).

The 171-residue stretch at 48-218 (CDCNANRTLL…EAKKAEIRED (171 aa)) folds into the PCI domain.

Belongs to the eIF-3 subunit K family.

The protein resides in the cytoplasm. Component of the eukaryotic translation initiation factor 3 (eIF-3) complex, which is involved in protein synthesis of a specialized repertoire of mRNAs and, together with other initiation factors, stimulates binding of mRNA and methionyl-tRNAi to the 40S ribosome. The eIF-3 complex specifically targets and initiates translation of a subset of mRNAs involved in cell proliferation. This Pyricularia oryzae (strain Y34) (Rice blast fungus) protein is Eukaryotic translation initiation factor 3 subunit K.